Reading from the N-terminus, the 79-residue chain is Neurotoxin 3FTx-LI (79 aa).

Positions 1–21 are cleaved as a signal peptide; the sequence is MKTLLLTLVVVTIVCLDLGYT. 4 disulfides stabilise this stretch: cysteine 24-cysteine 43, cysteine 36-cysteine 61, cysteine 65-cysteine 71, and cysteine 72-cysteine 77.

In terms of tissue distribution, expressed by the venom gland.

The protein localises to the secreted. Its function is as follows. Blocks both the muscle-twitch response to nerve stimulation and the response to exogenous acetylcholine. In Bungarus fasciatus (Banded krait), this protein is Neurotoxin 3FTx-LI.